The primary structure comprises 281 residues: 4-diphosphocytidyl-2-C-methyl-D-erythritol kinase (281 aa).

K15 is an active-site residue. Residue 98-108 (PTGAGLGGGSS) participates in ATP binding. Residue D140 is part of the active site.

It belongs to the GHMP kinase family. IspE subfamily.

The catalysed reaction is 4-CDP-2-C-methyl-D-erythritol + ATP = 4-CDP-2-C-methyl-D-erythritol 2-phosphate + ADP + H(+). It participates in isoprenoid biosynthesis; isopentenyl diphosphate biosynthesis via DXP pathway; isopentenyl diphosphate from 1-deoxy-D-xylulose 5-phosphate: step 3/6. In terms of biological role, catalyzes the phosphorylation of the position 2 hydroxy group of 4-diphosphocytidyl-2C-methyl-D-erythritol. The protein is 4-diphosphocytidyl-2-C-methyl-D-erythritol kinase of Neisseria meningitidis serogroup C (strain 053442).